Reading from the N-terminus, the 722-residue chain is Polyribonucleotide nucleotidyltransferase (722 aa).

Residues Asp-495 and Asp-501 each contribute to the Mg(2+) site. The KH domain occupies 562–621; sequence PRLLSFRIDPELIGTVIGPGGRTIKGITERTNTKIDIEDGGIVTIASHDGVAAEEAQKII. The 69-residue stretch at 631 to 699 folds into the S1 motif domain; that stretch reads GEVFTGSITR…NRGRINLTLR (69 aa).

This sequence belongs to the polyribonucleotide nucleotidyltransferase family. The cofactor is Mg(2+).

It is found in the cytoplasm. The enzyme catalyses RNA(n+1) + phosphate = RNA(n) + a ribonucleoside 5'-diphosphate. In terms of biological role, involved in mRNA degradation. Catalyzes the phosphorolysis of single-stranded polyribonucleotides processively in the 3'- to 5'-direction. The sequence is that of Polyribonucleotide nucleotidyltransferase from Prochlorococcus marinus (strain SARG / CCMP1375 / SS120).